Consider the following 112-residue polypeptide: Ferredoxin, plant-type (112 aa).

The 2Fe-2S ferredoxin-type domain maps to 6–97 (YEVFEVLSGQ…DLTIEYFRHV (92 aa)). [2Fe-2S] cluster contacts are provided by Cys41, Cys46, Cys49, and Cys81.

It belongs to the 2Fe2S plant-type ferredoxin family.

The protein operates within aromatic compound metabolism; catechol degradation. Ferredoxins are iron-sulfur proteins that transfer electrons in a wide variety of metabolic reactions. This is Ferredoxin, plant-type (xylT) from Pseudomonas putida (Arthrobacter siderocapsulatus).